We begin with the raw amino-acid sequence, 134 residues long: Small ribosomal subunit protein uS9 (134 aa).

Belongs to the universal ribosomal protein uS9 family.

The chain is Small ribosomal subunit protein uS9 from Pseudothermotoga lettingae (strain ATCC BAA-301 / DSM 14385 / NBRC 107922 / TMO) (Thermotoga lettingae).